A 332-amino-acid polypeptide reads, in one-letter code: 2,3-diketo-L-gulonate reductase (332 aa).

The Proton donor role is filled by His-44. Residues 168 to 174 (ITMVDMS), 224 to 225 (WK), and 304 to 306 (GHE) each bind NAD(+).

The protein belongs to the LDH2/MDH2 oxidoreductase family. DlgD subfamily. Homodimer.

It is found in the cytoplasm. The enzyme catalyses 3-dehydro-L-gulonate + NAD(+) = 2,3-dioxo-L-gulonate + NADH + H(+). It catalyses the reaction 3-dehydro-L-gulonate + NADP(+) = 2,3-dioxo-L-gulonate + NADPH + H(+). In terms of biological role, catalyzes the reduction of 2,3-diketo-L-gulonate in the presence of NADH, to form 3-keto-L-gulonate. The protein is 2,3-diketo-L-gulonate reductase of Mannheimia succiniciproducens (strain KCTC 0769BP / MBEL55E).